We begin with the raw amino-acid sequence, 509 residues long: MDIRAAEISQILKNEIANFGNEASVTEVGQVLSVGDGIARVYGLDNVEAGEMVEFENGVRGMALNLEVDNVGVVIFGSDRDIKEGQTVKRTGAIVDVPVGRGLLGRVVDALGNPIDGKGPIPYETRSRVDVKAPGIIPRKSVHEPMATGLKAIDALIPIGRGQRELIIGDRQTGKTAVALDAILNQKSANQGTDESAKLYCVYVAVGQKRSTVAQFVKVLEENGALEYSIIVAATASDPAPMQFLAPFSGCAMGEYFRDNAMHALIVYDDLSKQAVAYRQMSLLLRRPPGREAYPGDVFYLHSRLLERAAKLRDANGAGSLTALPVIETQANDVSAYIPTNVISITDGQIFLETDLFYQGIRPAVNVGLSVSRVGSAAQTKAMKKVAGKIKGELAQYREMAAFAQFGSDLDATTQRLLARGSRLTELLKQPQFAPLKMEEQVVVIYAGVNGYLDALPVARVRAFEDGLLALVRTSHGDLLETIRSSKDLSDASTQALKAIVETYAKNFA.

Residue 169-176 coordinates ATP; the sequence is GDRQTGKT.

The protein belongs to the ATPase alpha/beta chains family. As to quaternary structure, F-type ATPases have 2 components, CF(1) - the catalytic core - and CF(0) - the membrane proton channel. CF(1) has five subunits: alpha(3), beta(3), gamma(1), delta(1), epsilon(1). CF(0) has three main subunits: a(1), b(2) and c(9-12). The alpha and beta chains form an alternating ring which encloses part of the gamma chain. CF(1) is attached to CF(0) by a central stalk formed by the gamma and epsilon chains, while a peripheral stalk is formed by the delta and b chains.

The protein resides in the cell inner membrane. The enzyme catalyses ATP + H2O + 4 H(+)(in) = ADP + phosphate + 5 H(+)(out). In terms of biological role, produces ATP from ADP in the presence of a proton gradient across the membrane. The alpha chain is a regulatory subunit. This is ATP synthase subunit alpha from Methylocella silvestris (strain DSM 15510 / CIP 108128 / LMG 27833 / NCIMB 13906 / BL2).